Consider the following 546-residue polypeptide: MASPGSTALPHKRQRVRKACVPCRERKRKCNGKSPCEMCVAYGYVCHYIDGRVPSASPQVQQVGETSPDTESRPFVLPGIHRNEQPQPINTQNVTSQNIVDPTKSRYTIQHSAVAFPRCLGLELRSTNPPRLHSFAWHCGIRPEENPNSHVLLSDLVTKEEYYRISKVYFSVVHPIFDVVNPEQLAKNVEKYWDGDVKTLEYGAVIAGVIALGSFFMGSLGHPREMDIVQYAKGILDDPTFSRIPTVEQVSAWVLRTIYLRATSRPHVAWLASCVTIHLSEAIGLHHEIDREDIAISNNVPPKRTTVVSEHTRRLFWCAWSINTILSYDYGRSSVTLNRITCKPVKETDGNFTAHLVALAHLIPQDSVNANAAQLLQALAAVHESPNAHPFLSLTKGDICLSLYRRLRLLNHILDKNVVLQIIDIGNTALSAAYALVKLDQAWWNVLSTSFQYVCVLLAIDTPESLSHVATAMKTLDNITQILGTRIAFEAQKTAKLLLEDSMKKKRQEIQQLEQATHQRSNLETTHLLDIDWDALLDPSDTLNFM.

The zn(2)-C6 fungal-type DNA-binding region spans 20-46 (CVPCRERKRKCNGKSPCEMCVAYGYVC).

The protein resides in the nucleus. Its function is as follows. Transcriptional repressor of multidrug resistance genes, such as PDR5. Required for growth on non-fermentable carbon sources like lactate or glycerol. The polypeptide is Protein RDR1 (RDR1) (Saccharomyces cerevisiae (strain ATCC 204508 / S288c) (Baker's yeast)).